A 173-amino-acid polypeptide reads, in one-letter code: Inorganic pyrophosphatase (173 aa).

Lys28, Arg42, and Tyr54 together coordinate substrate. Asp64, Asp69, and Asp101 together coordinate Mg(2+). Tyr140 is a substrate binding site.

It belongs to the PPase family. In terms of assembly, homohexamer. The cofactor is Mg(2+).

The protein resides in the cytoplasm. The enzyme catalyses diphosphate + H2O = 2 phosphate + H(+). Its function is as follows. Catalyzes the hydrolysis of inorganic pyrophosphate (PPi) forming two phosphate ions. This Helicobacter pylori (strain ATCC 700392 / 26695) (Campylobacter pylori) protein is Inorganic pyrophosphatase.